Here is a 407-residue protein sequence, read N- to C-terminus: 1-deoxy-D-xylulose 5-phosphate reductoisomerase (407 aa).

Residues threonine 27, glycine 28, serine 29, isoleucine 30, alanine 53, arginine 54, asparagine 55, and asparagine 140 each coordinate NADPH. 1-deoxy-D-xylulose 5-phosphate is bound at residue lysine 141. Glutamate 142 lines the NADPH pocket. Residue aspartate 166 participates in Mn(2+) binding. 1-deoxy-D-xylulose 5-phosphate contacts are provided by serine 167, glutamate 168, serine 192, and histidine 215. Mn(2+) is bound at residue glutamate 168. Glycine 221 is a binding site for NADPH. Residues serine 228, asparagine 233, lysine 234, and glutamate 237 each contribute to the 1-deoxy-D-xylulose 5-phosphate site. A Mn(2+)-binding site is contributed by glutamate 237.

This sequence belongs to the DXR family. Mg(2+) is required as a cofactor. It depends on Mn(2+) as a cofactor.

The enzyme catalyses 2-C-methyl-D-erythritol 4-phosphate + NADP(+) = 1-deoxy-D-xylulose 5-phosphate + NADPH + H(+). Its pathway is isoprenoid biosynthesis; isopentenyl diphosphate biosynthesis via DXP pathway; isopentenyl diphosphate from 1-deoxy-D-xylulose 5-phosphate: step 1/6. Catalyzes the NADPH-dependent rearrangement and reduction of 1-deoxy-D-xylulose-5-phosphate (DXP) to 2-C-methyl-D-erythritol 4-phosphate (MEP). The chain is 1-deoxy-D-xylulose 5-phosphate reductoisomerase from Oleidesulfovibrio alaskensis (strain ATCC BAA-1058 / DSM 17464 / G20) (Desulfovibrio alaskensis).